The sequence spans 447 residues: Cobyrinate a,c-diamide synthase (447 aa).

Residues 252–439 (KIAVAFDESF…AHQHCIGNPY (188 aa)) enclose the GATase cobBQ-type domain. Cys-331 (nucleophile) is an active-site residue.

It belongs to the CobB/CbiA family. Requires Mg(2+) as cofactor.

It carries out the reaction cob(II)yrinate + 2 L-glutamine + 2 ATP + 2 H2O = cob(II)yrinate a,c diamide + 2 L-glutamate + 2 ADP + 2 phosphate + 2 H(+). The enzyme catalyses Ni-sirohydrochlorin + 2 L-glutamine + 2 ATP + 2 H2O = Ni-sirohydrochlorin a,c-diamide + 2 L-glutamate + 2 ADP + 2 phosphate + 2 H(+). It functions in the pathway cofactor biosynthesis; adenosylcobalamin biosynthesis; cob(II)yrinate a,c-diamide from sirohydrochlorin (anaerobic route): step 10/10. In terms of biological role, catalyzes the ATP-dependent amidation of the two carboxylate groups at positions a and c of cobyrinate, using either L-glutamine or ammonia as the nitrogen source. Involved in the biosynthesis of the unique nickel-containing tetrapyrrole coenzyme F430, the prosthetic group of methyl-coenzyme M reductase (MCR), which plays a key role in methanogenesis and anaerobic methane oxidation. Catalyzes the ATP-dependent amidation of the two carboxylate groups at positions a and c of Ni-sirohydrochlorin, using L-glutamine or ammonia as the nitrogen source. This chain is Cobyrinate a,c-diamide synthase, found in Methanococcus maripaludis (strain C5 / ATCC BAA-1333).